The chain runs to 342 residues: Uroporphyrinogen decarboxylase (342 aa).

Residues 26 to 30, D76, Y150, S205, and H321 contribute to the substrate site; that span reads RQAGR.

The protein belongs to the uroporphyrinogen decarboxylase family. In terms of assembly, homodimer.

The protein resides in the cytoplasm. The catalysed reaction is uroporphyrinogen III + 4 H(+) = coproporphyrinogen III + 4 CO2. It participates in porphyrin-containing compound metabolism; protoporphyrin-IX biosynthesis; coproporphyrinogen-III from 5-aminolevulinate: step 4/4. Catalyzes the decarboxylation of four acetate groups of uroporphyrinogen-III to yield coproporphyrinogen-III. This chain is Uroporphyrinogen decarboxylase, found in Sphingopyxis alaskensis (strain DSM 13593 / LMG 18877 / RB2256) (Sphingomonas alaskensis).